We begin with the raw amino-acid sequence, 345 residues long: Holliday junction branch migration complex subunit RuvB (345 aa).

Residues 1–22 (MIETDALSGGTPRRLVTQQPLS) are disordered. The tract at residues 4–193 (TDALSGGTPR…FGIVARLEFY (190 aa)) is large ATPase domain (RuvB-L). ATP is bound by residues Leu32, Arg33, Gly74, Lys77, Thr78, Thr79, 140 to 142 (EDY), Arg183, Tyr193, and Arg230. A Mg(2+)-binding site is contributed by Thr78. The tract at residues 194 to 264 (TPEELTRIVR…VADAALSMLD (71 aa)) is small ATPAse domain (RuvB-S). A head domain (RuvB-H) region spans residues 267 to 345 (PAGLDVMDRK…HFGFVPPERV (79 aa)). Residues Arg322 and Arg327 each contribute to the DNA site.

The protein belongs to the RuvB family. In terms of assembly, homohexamer. Forms an RuvA(8)-RuvB(12)-Holliday junction (HJ) complex. HJ DNA is sandwiched between 2 RuvA tetramers; dsDNA enters through RuvA and exits via RuvB. An RuvB hexamer assembles on each DNA strand where it exits the tetramer. Each RuvB hexamer is contacted by two RuvA subunits (via domain III) on 2 adjacent RuvB subunits; this complex drives branch migration. In the full resolvosome a probable DNA-RuvA(4)-RuvB(12)-RuvC(2) complex forms which resolves the HJ.

It localises to the cytoplasm. The catalysed reaction is ATP + H2O = ADP + phosphate + H(+). In terms of biological role, the RuvA-RuvB-RuvC complex processes Holliday junction (HJ) DNA during genetic recombination and DNA repair, while the RuvA-RuvB complex plays an important role in the rescue of blocked DNA replication forks via replication fork reversal (RFR). RuvA specifically binds to HJ cruciform DNA, conferring on it an open structure. The RuvB hexamer acts as an ATP-dependent pump, pulling dsDNA into and through the RuvAB complex. RuvB forms 2 homohexamers on either side of HJ DNA bound by 1 or 2 RuvA tetramers; 4 subunits per hexamer contact DNA at a time. Coordinated motions by a converter formed by DNA-disengaged RuvB subunits stimulates ATP hydrolysis and nucleotide exchange. Immobilization of the converter enables RuvB to convert the ATP-contained energy into a lever motion, pulling 2 nucleotides of DNA out of the RuvA tetramer per ATP hydrolyzed, thus driving DNA branch migration. The RuvB motors rotate together with the DNA substrate, which together with the progressing nucleotide cycle form the mechanistic basis for DNA recombination by continuous HJ branch migration. Branch migration allows RuvC to scan DNA until it finds its consensus sequence, where it cleaves and resolves cruciform DNA. In Laribacter hongkongensis (strain HLHK9), this protein is Holliday junction branch migration complex subunit RuvB.